The sequence spans 182 residues: MKELSKFDKEYLLGTIRDIKNFPKPGIIFKDITTLLGNAKAFKFLLDHLEDRYKDENLDFIVGIESRGFILGAALSARLNLGFVPVRKPNKLPYITISQKYSLEYGFDEVEMHIDAFDSIKNPKVLLVDDLIATGGTAKASSQLLKKLGVNLVEACFLVDLVELGGSKELKSECPVYSVLEV.

The protein belongs to the purine/pyrimidine phosphoribosyltransferase family. As to quaternary structure, homodimer.

The protein resides in the cytoplasm. It catalyses the reaction AMP + diphosphate = 5-phospho-alpha-D-ribose 1-diphosphate + adenine. The protein operates within purine metabolism; AMP biosynthesis via salvage pathway; AMP from adenine: step 1/1. Catalyzes a salvage reaction resulting in the formation of AMP, that is energically less costly than de novo synthesis. This Campylobacter fetus subsp. fetus (strain 82-40) protein is Adenine phosphoribosyltransferase.